Here is a 309-residue protein sequence, read N- to C-terminus: Intron-encoded DNA endonuclease ai2a (309 aa).

The protein belongs to the LAGLIDADG endonuclease family.

It is found in the mitochondrion. Its function is as follows. Mitochondrial DNA endonuclease involved in intron homing. Cleaves only one strand of intronless DNA sequence at the site which coincides with the I-SceII cleavage recognition site. This chain is Intron-encoded DNA endonuclease ai2a (ai2a), found in Dictyostelium discoideum (Social amoeba).